The sequence spans 599 residues: Bile salt-activated lipase (599 aa).

A signal peptide spans 1–20 (MGRLEVLFLGLTCCLAAACA). A disulfide bond links Cys84 and Cys100. Asn207 is a glycosylation site (N-linked (GlcNAc...) asparagine). Residue Ser214 is the Acyl-ester intermediate of the active site. An intrachain disulfide couples Cys266 to Cys277. Residue Asn325 is glycosylated (N-linked (GlcNAc...) asparagine). Residues Asp340 and His455 each act as charge relay system in the active site. Positions 553 to 599 (TGDQDTLTPPEDDSEVAPDPPSDDSQVVPVPPTDDSVEAQMPATIGF) are disordered. Tandem repeats lie at residues 559–569 (LTPPEDDSEVA), 570–580 (PDPPSDDSQVV), and 581–588 (PVPPTDDS). Residues 559–588 (LTPPEDDSEVAPDPPSDDSQVVPVPPTDDS) are 4 X 11 AA tandem repeats, O-glycosylated region.

The protein belongs to the type-B carboxylesterase/lipase family. In terms of assembly, interacts with CLC. In terms of tissue distribution, EXpressed by eosinophils.

Its subcellular location is the secreted. It carries out the reaction a triacylglycerol + H2O = a diacylglycerol + a fatty acid + H(+). It catalyses the reaction 1,2,3-tri-(9Z-octadecenoyl)-glycerol + H2O = di-(9Z)-octadecenoylglycerol + (9Z)-octadecenoate + H(+). The enzyme catalyses 1,2,3-trioctanoylglycerol + H2O = dioctanoylglycerol + octanoate + H(+). The catalysed reaction is a sterol ester + H2O = a sterol + a fatty acid + H(+). It carries out the reaction an acetyl ester + H2O = an aliphatic alcohol + acetate + H(+). It catalyses the reaction a butanoate ester + H2O = an aliphatic alcohol + butanoate + H(+). The enzyme catalyses 9-hexadecanoyloxy-octadecanoate + H2O = 9-hydroxy-octadecanoate + hexadecanoate + H(+). The catalysed reaction is 9-(9Z-octadecenoyloxy)-octadecanoate + H2O = 9-hydroxy-octadecanoate + (9Z)-octadecenoate + H(+). It carries out the reaction cholesteryl (9Z-octadecenoate) + H2O = cholesterol + (9Z)-octadecenoate + H(+). It catalyses the reaction 1-hexadecanoyl-sn-glycero-3-phosphocholine + H2O = sn-glycerol 3-phosphocholine + hexadecanoate + H(+). The enzyme catalyses 12-hexadecanoyloxy-octadecanoate + H2O = 12-hydroxyoctadecanoate + hexadecanoate + H(+). The catalysed reaction is 12-(9Z-octadecenoyloxy)-octadecanoate + H2O = 12-hydroxyoctadecanoate + (9Z)-octadecenoate + H(+). It carries out the reaction 13-(9Z-octadecenoyloxy)-octadecanoate + H2O = 13-hydroxy-octadecanoate + (9Z)-octadecenoate + H(+). It catalyses the reaction 9-(9Z-hexadecenoyloxy)-octadecanoate + H2O = (9Z)-hexadecenoate + 9-hydroxy-octadecanoate + H(+). The enzyme catalyses 12-(9Z-hexadecenoyloxy)-octadecanoate + H2O = 12-hydroxyoctadecanoate + (9Z)-hexadecenoate + H(+). The catalysed reaction is 13-(9Z-hexadecenoyloxy)-octadecanoate + H2O = 13-hydroxy-octadecanoate + (9Z)-hexadecenoate + H(+). It carries out the reaction 12-octadecanoyloxy-octadecanoate + H2O = 12-hydroxyoctadecanoate + octadecanoate + H(+). It catalyses the reaction 13-octadecanoyloxy-octadecanoate + H2O = 13-hydroxy-octadecanoate + octadecanoate + H(+). The enzyme catalyses 5-(9Z-hexadecenoyloxy)-octadecanoate + H2O = 5-hydroxy-octadecanoate + (9Z)-hexadecenoate + H(+). The catalysed reaction is 9-octadecanoyloxy-octadecanoate + H2O = 9-hydroxy-octadecanoate + octadecanoate + H(+). Activated by bile salts such as sodium taurocholate. Its function is as follows. Catalyzes the hydrolysis of a wide range of substrates including cholesteryl esters, phospholipids, lysophospholipids, di- and tri-acylglycerols, and fatty acid esters of hydroxy fatty acids (FAHFAs). Preferentially hydrolyzes FAHFAs with the ester bond further away from the carboxylate. Unsaturated FAHFAs are hydrolyzed more quickly than saturated FAHFAs. Has an essential role in the complete digestion of dietary lipids and their intestinal absorption, along with the absorption of fat-soluble vitamins. The sequence is that of Bile salt-activated lipase (Cel) from Mus musculus (Mouse).